The sequence spans 677 residues: Beta-galactosidase BgaA (677 aa).

Arginine 112 contacts substrate. Residue cysteine 116 coordinates Zn(2+). Asparagine 150 provides a ligand contact to substrate. Glutamate 151 functions as the Proton donor in the catalytic mechanism. The Zn(2+) site is built by cysteine 156, cysteine 158, and cysteine 161. Glutamate 309 serves as the catalytic Nucleophile. Substrate-binding positions include tryptophan 317 and 357–360 (EKYH).

It belongs to the glycosyl hydrolase 42 family. As to quaternary structure, dimer.

The enzyme catalyses Hydrolysis of terminal non-reducing beta-D-galactose residues in beta-D-galactosides.. With respect to regulation, no activity is lost during treatment with 20 or 100 mM EDTA in Z buffer for 3 hours at 0 degrees Celsius, nor is activity greatly stimulated by the addition of cations. Inhibited by 1 mM zinc and 1 mM copper, the levels of activity decrease to 10% of the untreated control. Nickel, cobalt and manganese at concentrations of 10 mM decrease enzyme activity to either 40% (for nickel and cobalt) or 60% (for manganese) of the activity in untreated controls. No change in enzyme activity in the presence of calcium and magnesium at concentrations up to 50 mM. EDTA-treated enzyme exhibits a slight increase in relative specific activity when it is assayed in the presence of 50 mM NaCl or 50 mM KCl, it does not exhibit enhanced activity at concentrations greater than 250 mM. Maintains between 20 and 40% of activity in the presence of 4 M NaCl or 4 M KCl, and it is more active in the presence of KCl than in the presence of NaCl. Retains 50% of activity in the presence of 3 M KCl or 2.5 M NaCl. Functionally, hydrolyzes o-nitrophenyl-beta-D-galactopyranoside (ONPG), p-nitrophenyl-beta-D-galactopyranoside (PNPG), 5-bromo-4-chloro-3-indoyl-beta-D-galactosde (X-gal), o-nitrophenyl-beta-D-fucopyranoside (ONPF) and p-nitrophenyl-beta-D-fucopyranoside (PNPF) with greatest activity towards ONPG and PNPG and low levels of activity with ONPF and PNPF. Detectable, but very low levels of activity towards p-nitrophenyl-beta-lactose (PNPL), p-nitrophenyl-beta-cellobiose (PNPC), p-nitrophenyl-alpha-galactopyranoside (PNP-alpha-G), and p-nitrophenyl-beta-xylopyranoside (PNPX). This is Beta-galactosidase BgaA from Planococcus sp. (strain 'SOS Orange').